A 949-amino-acid polypeptide reads, in one-letter code: MERISSAPSISLGYPPTESSAHLAPSFSDSATSTLSFKSLLEDPVNPIRPVYTPTRTEITPVTLSPIPITPVREFQPYLHEISQEYARYSKQKRASLRRYLEKHGKLEGSMKESSINGSLLRRSSVSTILRPASESSYPNSNSETITYDIDDNVNPSSSLVDNFSISSVPSVFFQSDFNLDDPQIFDVVSEHIDITQTSDAPNSNRNLLLNNSMLQEKISWYLDTVELHLLQEIENASDSFPMIIDNLKQLKKETRDNVEETKHLLEKLTEVNVMCDRHMDAISSEELACHQLTQLKKVVQTLEDIYSEHKKVSEDVKDQRFLEAINGINSIVTQLKKKSTELNVDLLSLPSVKSLREEHKVLYHTVSQSVVQQFSKFLTSDMHKFSTILDSNELKDIYLSKNRLIPSVTKSLPSAMEFDADFLHEVDVCIDCLTLTDSLQAALTLYKTAVFEAFENLAQQYFTDGVEMRSVRKSSDLRRSLSAASLSSLSDSSRRSSSAANPFQSMSITEFAEMLTNIYFSSLECLRRIRSQIKVLIDILSKKDTKQYHLSVILNDLMATSSDVVTQQVTTINNLRFRVLDTYPPNNVIYLFSLHIIFHNELESLCGITQSSFIPTIMRQLLDWFKNFQRYSTQKLASSFERELWEAIPVEPSCQDLANRVFECSGNTPVEWTRLLSPEAEKEDENHRVHHVKVSEDCTATVSFGKQSLHIVRSSVTLLETLDDYGKLLAHFSRLAPEFQTGMLDMFRTLNSRVYQLILGAGTVRSSGLSKVLGKHIALASQTIALFQLSLNSMCRYLSRVTGTRLTNETNKLDQDFTVHHLQIHDKFVSLMRERVAISCSQIASLSWDIDSPHGYIIDLSKSLIKLYKVLHRYSQRDCVEVIPDVIRMFEDRLQLELTDIARNPSKWPGVRIDLSYFYDMMASKCGYAGDRTLLEKFERTPEQQEAA.

The tract at residues 1–25 (MERISSAPSISLGYPPTESSAHLAP) is disordered. A coiled-coil region spans residues 243–312 (MIIDNLKQLK…LEDIYSEHKK (70 aa)). Phosphoserine is present on S483.

The protein belongs to the VPS54 family. In terms of assembly, component of the Golgi-associated retrograde protein (GARP) complex, also called VFT (VPS fifty-three) complex.

It is found in the golgi apparatus. Its subcellular location is the trans-Golgi network membrane. The protein localises to the endosome membrane. Involved in retrograde transport from early and late endosomes to late Golgi by linking the vesicle through the t-SNARE TGL1 to the Golgi, leading to the membrane fusion between late Golgi and endosomal vesicles. Also seems to be involved in protein transport from Golgi to the plasma membrane and is required for the integrity of the actin cytoskeleton. The sequence is that of Vacuolar protein sorting-associated protein 54 (vps54) from Schizosaccharomyces pombe (strain 972 / ATCC 24843) (Fission yeast).